The sequence spans 735 residues: Catalase-peroxidase (735 aa).

The tryptophyl-tyrosyl-methioninium (Trp-Tyr) (with M-249) cross-link spans 95–223 (WHSAGTYRTG…LAAVQMGLIY (129 aa)). The active-site Proton acceptor is the His96. Positions 223 to 249 (YVNPEGPDGVPDPIKSGIDIRETFARM) form a cross-link, tryptophyl-tyrosyl-methioninium (Tyr-Met) (with W-95). His264 contributes to the heme b binding site.

This sequence belongs to the peroxidase family. Peroxidase/catalase subfamily. As to quaternary structure, homodimer or homotetramer. Heme b serves as cofactor. Post-translationally, formation of the three residue Trp-Tyr-Met cross-link is important for the catalase, but not the peroxidase activity of the enzyme.

The enzyme catalyses H2O2 + AH2 = A + 2 H2O. The catalysed reaction is 2 H2O2 = O2 + 2 H2O. Its function is as follows. Bifunctional enzyme with both catalase and broad-spectrum peroxidase activity. In Aliarcobacter butzleri (strain RM4018) (Arcobacter butzleri), this protein is Catalase-peroxidase.